The following is an 86-amino-acid chain: UPF0367 protein NATL1_01981 (86 aa).

The protein belongs to the UPF0367 family.

This chain is UPF0367 protein NATL1_01981, found in Prochlorococcus marinus (strain NATL1A).